Reading from the N-terminus, the 456-residue chain is Shootin-1 (456 aa).

M1 carries the N-acetylmethionine modification. Residues S3 and S4 each carry the phosphoserine modification. Positions 7 to 353 (EKQLQLITSL…RVNQSENSVP (347 aa)) form a coiled coil. Phosphoserine; by PAK1 occurs at positions 101 and 249. Disordered stretches follow at residues 343-405 (KRVN…VTDL) and 418-445 (KKGVHLRPVNQTARPKTKPESSKGCESA). Pro residues predominate over residues 352-369 (VPPPPPPPPPLPPPPPNP). The residue at position 375 (S375) is a Phosphoserine.

This sequence belongs to the shootin family. Interacts with L1CAM; this interaction occurs in axonal growth cones. Interacts with actin filament retrograde flow; this interaction is enhanced in a netrin-1- and PAK1-dependent manner and promotes F-actin-substrate coupling and concomitant formation of traction forces at axonal growth cones. Interacts with RUFY3. Interacts with PFN2. Interacts (via N-terminus) with KIF20B; this interaction is direct and promotes the association of SHTN1 to microtubules in primary neurons. Associates with microtubule. Post-translationally, phosphorylated on Ser-101 and Ser-249 by PAK1 through a CDC42- and RAC1-dependent signaling pathway, which enhances its association with F-actin retrograde flow in filopodia and lamellipodia of axonal growth cones. Phosphorylation on Ser-101 and Ser-249 is increased by netrin-1.

Its subcellular location is the perikaryon. The protein resides in the cell projection. The protein localises to the axon. It localises to the growth cone. It is found in the cytoplasm. Its subcellular location is the cytoskeleton. The protein resides in the filopodium. The protein localises to the lamellipodium. In terms of biological role, involved in the generation of internal asymmetric signals required for neuronal polarization and neurite outgrowth. Mediates netrin-1-induced F-actin-substrate coupling or 'clutch engagement' within the axon growth cone through activation of CDC42, RAC1 and PAK1-dependent signaling pathway, thereby converting the F-actin retrograde flow into traction forces, concomitantly with filopodium extension and axon outgrowth. Plays a role in cytoskeletal organization by regulating the subcellular localization of phosphoinositide 3-kinase (PI3K) activity at the axonal growth cone. Also plays a role in regenerative neurite outgrowth. In the developing cortex, cooperates with KIF20B to promote both the transition from the multipolar to the bipolar stage and the radial migration of cortical neurons from the ventricular zone toward the superficial layer of the neocortex. Involved in the accumulation of phosphatidylinositol 3,4,5-trisphosphate (PIP3) in the growth cone of primary hippocampal neurons. This is Shootin-1 from Pongo abelii (Sumatran orangutan).